The sequence spans 438 residues: Enolase (438 aa).

A (2R)-2-phosphoglycerate-binding site is contributed by Gln-174. Glu-216 acts as the Proton donor in catalysis. Residues Asp-253, Glu-297, and Asp-324 each contribute to the Mg(2+) site. Positions 349, 378, 379, and 400 each coordinate (2R)-2-phosphoglycerate. Lys-349 (proton acceptor) is an active-site residue.

This sequence belongs to the enolase family. As to quaternary structure, component of the RNA degradosome, a multiprotein complex involved in RNA processing and mRNA degradation. It depends on Mg(2+) as a cofactor.

The protein localises to the cytoplasm. It localises to the secreted. Its subcellular location is the cell surface. The enzyme catalyses (2R)-2-phosphoglycerate = phosphoenolpyruvate + H2O. It functions in the pathway carbohydrate degradation; glycolysis; pyruvate from D-glyceraldehyde 3-phosphate: step 4/5. Functionally, catalyzes the reversible conversion of 2-phosphoglycerate (2-PG) into phosphoenolpyruvate (PEP). It is essential for the degradation of carbohydrates via glycolysis. The polypeptide is Enolase (Psychrobacter cryohalolentis (strain ATCC BAA-1226 / DSM 17306 / VKM B-2378 / K5)).